A 137-amino-acid chain; its full sequence is Large ribosomal subunit protein uL16 (137 aa).

The disordered stretch occupies residues 1–20 (MLQPSNRKYRKDFKGRNRGV). A compositionally biased stretch (basic residues) spans 7 to 17 (RKYRKDFKGRN).

This sequence belongs to the universal ribosomal protein uL16 family. In terms of assembly, part of the 50S ribosomal subunit.

Its function is as follows. Binds 23S rRNA and is also seen to make contacts with the A and possibly P site tRNAs. This chain is Large ribosomal subunit protein uL16, found in Coxiella burnetii (strain CbuK_Q154) (Coxiella burnetii (strain Q154)).